Reading from the N-terminus, the 300-residue chain is UDP-N-acetylenolpyruvoylglucosamine reductase (300 aa).

The FAD-binding PCMH-type domain occupies 30–194; sequence RVGGPADFFV…IGATFVLDSD (165 aa). Residue Arg174 is part of the active site. Catalysis depends on Ser223, which acts as the Proton donor. Glu293 is an active-site residue.

It belongs to the MurB family. Requires FAD as cofactor.

It is found in the cytoplasm. The catalysed reaction is UDP-N-acetyl-alpha-D-muramate + NADP(+) = UDP-N-acetyl-3-O-(1-carboxyvinyl)-alpha-D-glucosamine + NADPH + H(+). It functions in the pathway cell wall biogenesis; peptidoglycan biosynthesis. Its function is as follows. Cell wall formation. The chain is UDP-N-acetylenolpyruvoylglucosamine reductase from Geobacter sulfurreducens (strain ATCC 51573 / DSM 12127 / PCA).